The chain runs to 860 residues: MEIGSAGPIGAQPLFIVPRRPGYGTMGKPIKLLANCFQVEIPKIDVYLYEVDIKPDKCPRRVNREVVDSMVQHFKVTIFGDRRPVYDGKRSLYTANPLPVATTGVDLDVTLPGEGGKDRPFKVSVKFVSRVSWHLLHEALAGGTLPEPLELDKPVSTNPVHAVDVVLRHLPSMKYTPVGRSFFSAPEGYDHPLGGGREVWFGFHQSVRPAMWKMMLNIDVSATAFYKAQPVIQFMCEVLDIHNIDEQPRPLTDSHRVKFTKEIKGLKVEVTHCGTMRRKYRVCNVTRRPASHQTFPLQLENGQTVERTVAQYFREKYTLQLKYPHLPCLQVGQEQKHTYLPLEVCNIVAGQRCIKKLTDNQTSTMIKATARSAPDRQEEISRLVRSANYETDPFVQEFQFKVRDEMAHVTGRVLPAPMLQYGGRNRTVATPSHGVWDMRGKQFHTGVEIKMWAIACFATQRQCREEILKGFTDQLRKISKDAGMPIQGQPCFCKYAQGADSVEPMFRHLKNTYSGLQLIIVILPGKTPVYAEVKRVGDTLLGMATQCVQVKNVIKTSPQTLSNLCLKINVKLGGINNILVPHQRPSVFQQPVIFLGADVTHPPAGDGKKPSIAAVVGSMDAHPSRYCATVRVQRPRQEIIQDLASMVRELLIQFYKSTRFKPTRIIFYRDGVSEGQFRQVLYYELLAIREACISLEKDYQPGITYIVVQKRHHTRLFCADRTERVGRSGNIPAGTTVDTDITHPYEFDFYLCSHAGIQGTSRPSHYHVLWDDNFFTADELQLLTYQLCHTYVRCTRSVSIPAPAYYAHLVAFRARYHLVDKEHDSAEGSHVSGQSNGRDPQALAKAVQIHQDTLRTMYFA.

Met-1 carries the N-acetylmethionine modification. One can recognise a PAZ domain in the interval 230 to 349; that stretch reads PVIQFMCEVL…LPLEVCNIVA (120 aa). One can recognise a Piwi domain in the interval 518 to 819; it reads LIIVILPGKT…VAFRARYHLV (302 aa). Residues 530 to 567 are interaction with guide RNA; that stretch reads YAEVKRVGDTLLGMATQCVQVKNVIKTSPQTLSNLCLK. A divalent metal cation-binding residues include Asp-598, Glu-638, and Asp-670. The interaction with guide RNA stretch occupies residues 758–805; it reads QGTSRPSHYHVLWDDNFFTADELQLLTYQLCHTYVRCTRSVSIPAPAY. His-808 is a binding site for a divalent metal cation. The residue at position 825 (Ser-825) is a Phosphoserine.

This sequence belongs to the argonaute family. Ago subfamily. Interacts with EIF4B, IMP8, PRMT5 and TNRC6B. Interacts with APOBEC3F, APOBEC3G and APOBEC3H. Interacts with EDC4. Ubiquitinated on surface-exposed lysines by a SCF-like E3 ubiquitin-protein ligase complex containing ZSWIM8 during target-directed microRNA degradation (TDMD), a process that mediates degradation of microRNAs (miRNAs). Ubiquitination by the SCF-like E3 ubiquitin-protein ligase complex containing ZSWIM8 leads to its subsequent degradation, thereby exposing miRNAs for degradation. ZSWIM8 recognizes and binds AGO3 when it is engaged with a TDMD target.

It localises to the cytoplasm. It is found in the P-body. The catalysed reaction is Endonucleolytic cleavage to 5'-phosphomonoester.. Required for RNA-mediated gene silencing (RNAi). Binds to short RNAs such as microRNAs (miRNAs) and represses the translation of mRNAs which are complementary to them. Proposed to be involved in stabilization of small RNA derivates (siRNA) derived from processed RNA polymerase III-transcribed Alu repeats containing a DR2 retinoic acid response element (RARE) in stem cells and in the subsequent siRNA-dependent degradation of a subset of RNA polymerase II-transcribed coding mRNAs by recruiting a mRNA decapping complex involving EDC4. Possesses RNA slicer activity but only on select RNAs bearing 5'- and 3'-flanking sequences to the region of guide-target complementarity. This Mus musculus (Mouse) protein is Protein argonaute-3 (Ago3).